Here is a 428-residue protein sequence, read N- to C-terminus: Serine--tRNA ligase (428 aa).

Residue 235–237 (TAE) coordinates L-serine. Residue 266 to 268 (RSE) participates in ATP binding. Glu-289 contributes to the L-serine binding site. 353 to 356 (EISS) provides a ligand contact to ATP. Ser-389 is an L-serine binding site.

This sequence belongs to the class-II aminoacyl-tRNA synthetase family. Type-1 seryl-tRNA synthetase subfamily. As to quaternary structure, homodimer. The tRNA molecule binds across the dimer.

It is found in the cytoplasm. The catalysed reaction is tRNA(Ser) + L-serine + ATP = L-seryl-tRNA(Ser) + AMP + diphosphate + H(+). It carries out the reaction tRNA(Sec) + L-serine + ATP = L-seryl-tRNA(Sec) + AMP + diphosphate + H(+). It functions in the pathway aminoacyl-tRNA biosynthesis; selenocysteinyl-tRNA(Sec) biosynthesis; L-seryl-tRNA(Sec) from L-serine and tRNA(Sec): step 1/1. Catalyzes the attachment of serine to tRNA(Ser). Is also able to aminoacylate tRNA(Sec) with serine, to form the misacylated tRNA L-seryl-tRNA(Sec), which will be further converted into selenocysteinyl-tRNA(Sec). The sequence is that of Serine--tRNA ligase from Shewanella baltica (strain OS185).